A 159-amino-acid polypeptide reads, in one-letter code: ATP synthase subunit b (159 aa).

A helical membrane pass occupies residues 7–27; that stretch reads VIFMTIINFCILVAILKHFFW.

Belongs to the ATPase B chain family. As to quaternary structure, F-type ATPases have 2 components, F(1) - the catalytic core - and F(0) - the membrane proton channel. F(1) has five subunits: alpha(3), beta(3), gamma(1), delta(1), epsilon(1). F(0) has three main subunits: a(1), b(2) and c(10-14). The alpha and beta chains form an alternating ring which encloses part of the gamma chain. F(1) is attached to F(0) by a central stalk formed by the gamma and epsilon chains, while a peripheral stalk is formed by the delta and b chains.

The protein resides in the cell membrane. In terms of biological role, f(1)F(0) ATP synthase produces ATP from ADP in the presence of a proton or sodium gradient. F-type ATPases consist of two structural domains, F(1) containing the extramembraneous catalytic core and F(0) containing the membrane proton channel, linked together by a central stalk and a peripheral stalk. During catalysis, ATP synthesis in the catalytic domain of F(1) is coupled via a rotary mechanism of the central stalk subunits to proton translocation. Component of the F(0) channel, it forms part of the peripheral stalk, linking F(1) to F(0). The protein is ATP synthase subunit b of Clostridium botulinum (strain Alaska E43 / Type E3).